The primary structure comprises 257 residues: UPF0246 protein CPS_4102 (257 aa).

It belongs to the UPF0246 family.

In Colwellia psychrerythraea (strain 34H / ATCC BAA-681) (Vibrio psychroerythus), this protein is UPF0246 protein CPS_4102.